A 236-amino-acid chain; its full sequence is Enolase-phosphatase E1 (236 aa).

Belongs to the HAD-like hydrolase superfamily. MasA/MtnC family. Monomer. Requires Mg(2+) as cofactor.

It carries out the reaction 5-methylsulfanyl-2,3-dioxopentyl phosphate + H2O = 1,2-dihydroxy-5-(methylsulfanyl)pent-1-en-3-one + phosphate. It participates in amino-acid biosynthesis; L-methionine biosynthesis via salvage pathway; L-methionine from S-methyl-5-thio-alpha-D-ribose 1-phosphate: step 3/6. It functions in the pathway amino-acid biosynthesis; L-methionine biosynthesis via salvage pathway; L-methionine from S-methyl-5-thio-alpha-D-ribose 1-phosphate: step 4/6. Functionally, bifunctional enzyme that catalyzes the enolization of 2,3-diketo-5-methylthiopentyl-1-phosphate (DK-MTP-1-P) into the intermediate 2-hydroxy-3-keto-5-methylthiopentenyl-1-phosphate (HK-MTPenyl-1-P), which is then dephosphorylated to form the acireductone 1,2-dihydroxy-3-keto-5-methylthiopentene (DHK-MTPene). The chain is Enolase-phosphatase E1 from Frankia alni (strain DSM 45986 / CECT 9034 / ACN14a).